The chain runs to 233 residues: MAFSYASFSTPFNGFAANPSPITSAFLGPSLRFSTRTSKTRNPSNGVSVKSSNSHRFLVKSKNFSVYARAAAEKSVHDFTVKDIDGNDVSLDKFKGKPLLIVNVASRCGLTSSNYSELSQLYEKYKNQGFEILAFPCNQFGGQEPGSNPEIKQFACTRFKAEFPIFDKVDVNGPSTAPIYKFLKSNAGGFLGDIIKWNFEKFLVDKKGKVVERYPPTTSPFQIEKDIQKLLAA.

The transit peptide at 1–69 directs the protein to the chloroplast; the sequence is MAFSYASFST…KSKNFSVYAR (69 aa). The active site involves C108.

Belongs to the glutathione peroxidase family.

The protein resides in the plastid. It localises to the chloroplast. It catalyses the reaction 2 glutathione + H2O2 = glutathione disulfide + 2 H2O. Functionally, may constitute a glutathione peroxidase-like protective system against oxidative stresses. The polypeptide is Putative glutathione peroxidase 7, chloroplastic (GPX7) (Arabidopsis thaliana (Mouse-ear cress)).